The sequence spans 333 residues: (2R)-3-sulfolactate dehydrogenase (NADP(+)) (333 aa).

Belongs to the LDH2/MDH2 oxidoreductase family.

It catalyses the reaction (2R)-3-sulfolactate + NADP(+) = 3-sulfopyruvate + NADPH + H(+). Its function is as follows. Catalyzes the reduction of sulfopyruvate to (R)-sulfolactate. Together with SlcC, provides a racemase system that converts (2S)-3-sulfolactate to (2R)-3-sulfolactate, which is degraded further by (2R)-sulfolactate sulfo-lyase. This is (2R)-3-sulfolactate dehydrogenase (NADP(+)) (comC) from Chromohalobacter salexigens (strain ATCC BAA-138 / DSM 3043 / CIP 106854 / NCIMB 13768 / 1H11).